Consider the following 128-residue polypeptide: Large ribosomal subunit protein bL20c (128 aa).

The protein belongs to the bacterial ribosomal protein bL20 family.

The protein localises to the plastid. Binds directly to 23S ribosomal RNA and is necessary for the in vitro assembly process of the 50S ribosomal subunit. It is not involved in the protein synthesizing functions of that subunit. The sequence is that of Large ribosomal subunit protein bL20c (rpl20) from Lathraea clandestina (Purple toothwort).